We begin with the raw amino-acid sequence, 44 residues long: Thymosin beta (44 aa).

Positions 1–44 are disordered; sequence MSDKHDKPDISEVTKFDKSKLKKTETHEKNPLPTKETIDQEKQG. An N-acetylserine modification is found at Ser2.

As to expression, expressed in regenerating axons.

It localises to the cytoplasm. The protein localises to the cytoskeleton. Its function is as follows. Plays an important role in the organization of the cytoskeleton. Binds to and sequesters actin monomers (G actin) and therefore inhibits actin polymerization. May be involved in the regulation of structural plasticity in the CNS. The protein is Thymosin beta of Aplysia californica (California sea hare).